Here is a 497-residue protein sequence, read N- to C-terminus: 3-octaprenyl-4-hydroxybenzoate carboxy-lyase (497 aa).

A Mn(2+)-binding site is contributed by Asn-172. Residues 175–177, 189–191, and 194–195 contribute to the prenylated FMN site; these read IYR, RWL, and RG. Glu-238 contributes to the Mn(2+) binding site. Asp-287 serves as the catalytic Proton donor.

It belongs to the UbiD family. As to quaternary structure, homohexamer. Requires prenylated FMN as cofactor. Mn(2+) is required as a cofactor.

Its subcellular location is the cell membrane. It catalyses the reaction a 4-hydroxy-3-(all-trans-polyprenyl)benzoate + H(+) = a 2-(all-trans-polyprenyl)phenol + CO2. It functions in the pathway cofactor biosynthesis; ubiquinone biosynthesis. Functionally, catalyzes the decarboxylation of 3-octaprenyl-4-hydroxy benzoate to 2-octaprenylphenol, an intermediate step in ubiquinone biosynthesis. The protein is 3-octaprenyl-4-hydroxybenzoate carboxy-lyase of Enterobacter sp. (strain 638).